A 165-amino-acid chain; its full sequence is Chorismate pyruvate-lyase (165 aa).

The substrate site is built by Met-35, Arg-77, Leu-115, and Glu-156.

It belongs to the UbiC family. In terms of assembly, monomer.

It is found in the cytoplasm. It catalyses the reaction chorismate = 4-hydroxybenzoate + pyruvate. It functions in the pathway cofactor biosynthesis; ubiquinone biosynthesis. Functionally, removes the pyruvyl group from chorismate, with concomitant aromatization of the ring, to provide 4-hydroxybenzoate (4HB) for the ubiquinone pathway. The chain is Chorismate pyruvate-lyase from Shigella dysenteriae serotype 1 (strain Sd197).